We begin with the raw amino-acid sequence, 621 residues long: Interferon-induced GTP-binding protein Mx1 (621 aa).

The Dynamin-type G domain maps to 31–304 (DLALPAIAVI…LVHHIEKSLP (274 aa)). The interval 41-48 (GDQSSGKS) is G1 motif. 41 to 48 (GDQSSGKS) provides a ligand contact to GTP. The interval 66 to 68 (VTR) is G2 motif. The segment at 142–145 (DLPG) is G3 motif. GTP contacts are provided by residues 142–146 (DLPGI) and 211–214 (TKPD). The tract at residues 211–214 (TKPD) is G4 motif. A G5 motif region spans residues 243-246 (KCRG). The GED domain maps to 535–621 (LQEMMLHLKS…MKARSYLVEF (87 aa)).

The protein belongs to the TRAFAC class dynamin-like GTPase superfamily. Dynamin/Fzo/YdjA family.

It localises to the cytoplasm. Its function is as follows. Does not inhibit strain RB-1 of the fish pathogen, infectious hematopoietic necrosis virus (IHNV). This Oncorhynchus mykiss (Rainbow trout) protein is Interferon-induced GTP-binding protein Mx1 (mx1).